We begin with the raw amino-acid sequence, 547 residues long: Dihydroxy-acid dehydratase (547 aa).

Asp-78 contacts Mg(2+). A [2Fe-2S] cluster-binding site is contributed by Cys-119. Mg(2+)-binding residues include Asp-120 and Lys-121. Position 121 is an N6-carboxylysine (Lys-121). Cys-191 provides a ligand contact to [2Fe-2S] cluster. Residue Glu-439 coordinates Mg(2+). The active-site Proton acceptor is the Ser-464.

Belongs to the IlvD/Edd family. Homodimer. It depends on [2Fe-2S] cluster as a cofactor. The cofactor is Mg(2+).

It carries out the reaction (2R)-2,3-dihydroxy-3-methylbutanoate = 3-methyl-2-oxobutanoate + H2O. The catalysed reaction is (2R,3R)-2,3-dihydroxy-3-methylpentanoate = (S)-3-methyl-2-oxopentanoate + H2O. The protein operates within amino-acid biosynthesis; L-isoleucine biosynthesis; L-isoleucine from 2-oxobutanoate: step 3/4. Its pathway is amino-acid biosynthesis; L-valine biosynthesis; L-valine from pyruvate: step 3/4. Functionally, functions in the biosynthesis of branched-chain amino acids. Catalyzes the dehydration of (2R,3R)-2,3-dihydroxy-3-methylpentanoate (2,3-dihydroxy-3-methylvalerate) into 2-oxo-3-methylpentanoate (2-oxo-3-methylvalerate) and of (2R)-2,3-dihydroxy-3-methylbutanoate (2,3-dihydroxyisovalerate) into 2-oxo-3-methylbutanoate (2-oxoisovalerate), the penultimate precursor to L-isoleucine and L-valine, respectively. This chain is Dihydroxy-acid dehydratase, found in Archaeoglobus fulgidus (strain ATCC 49558 / DSM 4304 / JCM 9628 / NBRC 100126 / VC-16).